The primary structure comprises 390 residues: GTPase Obg (390 aa).

The Obg domain occupies 1-159 (MKFIDESLIR…RDLLLELMLL (159 aa)). The OBG-type G domain maps to 160–333 (ADVGMLGLPN…LCRDIMDFII (174 aa)). GTP is bound by residues 166–173 (GLPNAGKS), 191–195 (FTTLV), 213–216 (DIPG), 283–286 (NKID), and 314–316 (SAA). 2 residues coordinate Mg(2+): serine 173 and threonine 193.

This sequence belongs to the TRAFAC class OBG-HflX-like GTPase superfamily. OBG GTPase family. As to quaternary structure, monomer. The cofactor is Mg(2+).

The protein resides in the cytoplasm. In terms of biological role, an essential GTPase which binds GTP, GDP and possibly (p)ppGpp with moderate affinity, with high nucleotide exchange rates and a fairly low GTP hydrolysis rate. Plays a role in control of the cell cycle, stress response, ribosome biogenesis and in those bacteria that undergo differentiation, in morphogenesis control. The protein is GTPase Obg of Haemophilus influenzae (strain 86-028NP).